A 638-amino-acid chain; its full sequence is Factor of DNA methylation 3 (638 aa).

A coiled-coil region spans residues 318 to 497; it reads FNRIFADHEK…RALISNLRDM (180 aa).

Acts in association with FDM4 and FDM5 for RNA-directed DNA methylation (RdDM). The sequence is that of Factor of DNA methylation 3 from Arabidopsis thaliana (Mouse-ear cress).